Consider the following 114-residue polypeptide: Ribonuclease P protein component (114 aa).

Belongs to the RnpA family. In terms of assembly, consists of a catalytic RNA component (M1 or rnpB) and a protein subunit.

It catalyses the reaction Endonucleolytic cleavage of RNA, removing 5'-extranucleotides from tRNA precursor.. RNaseP catalyzes the removal of the 5'-leader sequence from pre-tRNA to produce the mature 5'-terminus. It can also cleave other RNA substrates such as 4.5S RNA. The protein component plays an auxiliary but essential role in vivo by binding to the 5'-leader sequence and broadening the substrate specificity of the ribozyme. This Lactiplantibacillus plantarum (strain ATCC BAA-793 / NCIMB 8826 / WCFS1) (Lactobacillus plantarum) protein is Ribonuclease P protein component.